The chain runs to 420 residues: Replication factor C large subunit (420 aa).

ATP is bound at residue 46–53; the sequence is GVQGSGKT.

The protein belongs to the activator 1 small subunits family. RfcL subfamily. In terms of assembly, heteromultimer composed of small subunits (RfcS) and large subunits (RfcL).

Part of the RFC clamp loader complex which loads the PCNA sliding clamp onto DNA. The protein is Replication factor C large subunit of Thermoplasma volcanium (strain ATCC 51530 / DSM 4299 / JCM 9571 / NBRC 15438 / GSS1).